Here is a 105-residue protein sequence, read N- to C-terminus: Small ribosomal subunit protein bS20 (105 aa).

The protein belongs to the bacterial ribosomal protein bS20 family.

Binds directly to 16S ribosomal RNA. The polypeptide is Small ribosomal subunit protein bS20 (Caldanaerobacter subterraneus subsp. tengcongensis (strain DSM 15242 / JCM 11007 / NBRC 100824 / MB4) (Thermoanaerobacter tengcongensis)).